Consider the following 455-residue polypeptide: Phosphoglucosamine/phosphogalactosamine mutase (455 aa).

S97 acts as the Phosphoserine intermediate in catalysis. Mg(2+) is bound by residues S97, D241, D243, and D245. S97 carries the phosphoserine modification.

It belongs to the phosphohexose mutase family. Mg(2+) is required as a cofactor. Post-translationally, activated by phosphorylation.

The catalysed reaction is alpha-D-glucosamine 1-phosphate = D-glucosamine 6-phosphate. The enzyme catalyses D-galactosamine 6-phosphate = alpha-D-galactosamine 1-phosphate. Its function is as follows. Involved in the synthesis of UDP-N-acetylglucosamine (UDP-GlcNAc) and UDP-N-acetylgalactosamine (UDP-GalNAc). Catalyzes the conversion of glucosamine-6-phosphate to glucosamine-1-phosphate and of galactosamine-6-phosphate to galactosamine-1-phosphate. The protein is Phosphoglucosamine/phosphogalactosamine mutase of Sulfurisphaera tokodaii (strain DSM 16993 / JCM 10545 / NBRC 100140 / 7) (Sulfolobus tokodaii).